The chain runs to 91 residues: Bacterial microcompartment shell protein PduJ (91 aa).

The 85-residue stretch at 4 to 88 (ALGLVETKGL…PHSDVEAILP (85 aa)) folds into the BMC domain.

This sequence belongs to the bacterial microcompartments protein family. Homohexamer with a central pore of about 5.7 Angstroms in diameter. Interacts with PduP, which targets PduP to the BMC.

Its subcellular location is the bacterial microcompartment. Its pathway is polyol metabolism; 1,2-propanediol degradation. One of the major shell proteins of the bacterial microcompartment (BMC) dedicated to 1,2-propanediol (1,2-PD) degradation. The isolated BMC shell component protein ratio for J:A:B':B:K:T:U is approximately 15:10:7:6:1:1:2. At least one of PduA or PduJ is required for BMC assembly; it must be encoded as the first gene in the pdu operon. Required for structural integrity of BMCs and to mitigate propionaldehyde toxicity, probably joins facets responsible for BMC closure. Edge residues (particularly Lys-25) are important for function and assembly of the BMC. 80% identical to PduA; although their pore regions appear structurally identical, unlike PduA plays no role in 1,2-PD diffusion into or out of the BMC shell. If pduJ is cloned in the chromosomal position of pduA it is able to complement a pduA deletion; it then has a functional pore as it assumes the transport functions of PduA. Overexpression of this protein leads to aberrant filaments that extend the length of the cell, cross the cleavage furrow and impair division. The filaments form nanotubes with a hollow center. Modeling suggests PduJ is probably the hub for binding multiple enzymes to the interior of the BMC; modeling suggests PduC, PduD, PduG and PduM are targeted to PduJ. In terms of biological role, the 1,2-propanediol (1,2-PD) degradation bacterial microcompartment (BMC) concentrates low levels of 1,2-PD catabolic enzymes, concentrates volatile reaction intermediates thus enhancing pathway flux and keeps the level of toxic, mutagenic propionaldehyde low. The protein is Bacterial microcompartment shell protein PduJ of Salmonella typhimurium (strain LT2 / SGSC1412 / ATCC 700720).